A 428-amino-acid chain; its full sequence is Histidine--tRNA ligase (428 aa).

It belongs to the class-II aminoacyl-tRNA synthetase family. In terms of assembly, homodimer.

The protein localises to the cytoplasm. It carries out the reaction tRNA(His) + L-histidine + ATP = L-histidyl-tRNA(His) + AMP + diphosphate + H(+). The chain is Histidine--tRNA ligase from Mesomycoplasma hyopneumoniae (strain 232) (Mycoplasma hyopneumoniae).